The sequence spans 752 residues: uncharacterized protein (752 aa).

Ser202 and Ser582 each carry phosphoserine. The tract at residues 596 to 752 is disordered; sequence EEEKESVEVE…KTGEDGEIVL (157 aa). Basic and acidic residues-rich tracts occupy residues 601 to 613 and 641 to 677; these read SVEVEEGKHKNDL and LKSEDDNTSEASKDPSSHVKSPENIEKLKQNDDHFEV. The span at 695 to 718 shows a compositional bias: polar residues; sequence NNVAETILEVTSSPKSSENSQKQS. Residues Ser707 and Ser738 each carry the phosphoserine modification.

This is an uncharacterized protein from Schizosaccharomyces pombe (strain 972 / ATCC 24843) (Fission yeast).